The following is a 307-amino-acid chain: Ribosomal RNA small subunit methyltransferase H (307 aa).

Residues 34 to 36 (GGH), Asp-53, Leu-88, Asp-102, and Gln-109 each bind S-adenosyl-L-methionine.

Belongs to the methyltransferase superfamily. RsmH family.

The protein localises to the cytoplasm. It carries out the reaction cytidine(1402) in 16S rRNA + S-adenosyl-L-methionine = N(4)-methylcytidine(1402) in 16S rRNA + S-adenosyl-L-homocysteine + H(+). Functionally, specifically methylates the N4 position of cytidine in position 1402 (C1402) of 16S rRNA. The protein is Ribosomal RNA small subunit methyltransferase H of Sulfurimonas denitrificans (strain ATCC 33889 / DSM 1251) (Thiomicrospira denitrificans (strain ATCC 33889 / DSM 1251)).